The chain runs to 120 residues: PE family protein PE10 (120 aa).

Residues 29–59 are disordered; sequence GQVTGNGGSGNSGTSAAAANPNSDNTASIAD. The segment covering 40–51 has biased composition (low complexity); the sequence is SGTSAAAANPNS.

The protein belongs to the mycobacterial PE family. In terms of assembly, forms a complex with PE9. The complex interacts with human TLR4.

Its subcellular location is the secreted. The protein resides in the cell wall. In terms of biological role, together with PE9, induces macrophage apoptosis through human Toll-like receptor 4 (TLR4) signaling pathway. Interaction with TLR4 leads to increased levels of phospho-IRF-3, increase in the transcript levels of IFN-beta and pro-apoptotic genes, up-regulation of IL-10, down-regulation of IL-1b and enhanced levels of macrophage apoptosis. The chain is PE family protein PE10 from Mycobacterium tuberculosis (strain ATCC 25618 / H37Rv).